We begin with the raw amino-acid sequence, 219 residues long: Carbonic anhydrase 1 (219 aa).

Cysteine 39, aspartate 41, histidine 98, and cysteine 101 together coordinate Zn(2+).

The protein belongs to the beta-class carbonic anhydrase family. As to quaternary structure, oligomer. Requires Zn(2+) as cofactor.

The catalysed reaction is hydrogencarbonate + H(+) = CO2 + H2O. Its function is as follows. Reversible hydration of carbon dioxide. Carbon dioxide formed in the bicarbonate-dependent decomposition of cyanate by cyanase (CynS) diffuses out of the cell faster than it would be hydrated to bicarbonate, so the apparent function of this enzyme is to catalyze the hydration of carbon dioxide and thus prevent depletion of cellular bicarbonate. The sequence is that of Carbonic anhydrase 1 (cynT) from Escherichia coli O157:H7.